We begin with the raw amino-acid sequence, 1363 residues long: Spike glycoprotein (1363 aa).

A signal peptide spans 1–13 (MFLILLISLPMAF). Residues 14-1307 (AVIGDLKCTT…GTYEYYVKWP (1294 aa)) lie on the Extracellular side of the membrane. In terms of domain architecture, BetaCoV S1-NTD spans 15–298 (VIGDLKCTTV…DFMSEIKCKT (284 aa)). 5 disulfides stabilise this stretch: Cys21/Cys165, Cys160/Cys193, Cys172/Cys252, Cys286/Cys296, and Cys331/Cys356. N-linked (GlcNAc...) asparagine; by host glycans are attached at residues Asn59 and Asn133. Asn198 is a glycosylation site (N-linked (GlcNAc...) asparagine; by host). A BetaCoV S1-CTD domain is found at 329–617 (PDCNIEAWLN…DVNSGTTCST (289 aa)). An N-linked (GlcNAc...) asparagine; by host glycan is attached at Asn359. 2 disulfides stabilise this stretch: Cys374–Cys427 and Cys386–Cys615. N-linked (GlcNAc...) asparagine; by host glycosylation is found at Asn437, Asn649, Asn676, Asn696, Asn714, Asn739, and Asn788. Fusion peptide regions lie at residues 914-935 (SAIE…VEAY) and 933-953 (EAYN…VQSY). Asn937 carries an N-linked (GlcNAc...) asparagine; by host glycan. The cysteines at positions 938 and 949 are disulfide-linked. The heptad repeat 1 stretch occupies residues 1014-1064 (QKLIANAFNNALDAIQEGFDATNSALVKIQAVVNANAEALNNLLQQLSNRF). The stretch at 1043 to 1087 (QAVVNANAEALNNLLQQLSNRFGAISSSLQEILSRLDALEAQAQI) forms a coiled coil. Asn1194, Asn1224, Asn1234, Asn1253, Asn1267, and Asn1288 each carry an N-linked (GlcNAc...) asparagine; by host glycan. Residues 1258–1296 (APDLSLDYINVTFLDLQDEMNRLQEAIKVLNQSYINLKD) form a heptad repeat 2 region. Positions 1269 to 1297 (TFLDLQDEMNRLQEAIKVLNQSYINLKDI) form a coiled coil. A helical transmembrane segment spans residues 1308 to 1328 (WYVWLLIGFAGVAMLVLLFFI). The Cytoplasmic portion of the chain corresponds to 1329-1363 (CCCTGCGTSCFKICGGCCDDYTGHQELVIKTSHDD). The KxHxx motif lies at 1359-1363 (TSHDD).

Belongs to the betacoronaviruses spike protein family. Homotrimer; each monomer consists of a S1 and a S2 subunit. The resulting peplomers protrude from the virus surface as spikes. Post-translationally, specific enzymatic cleavages in vivo yield mature proteins. The precursor is processed into S1 and S2 by host cell furin or another cellular protease to yield the mature S1 and S2 proteins. Additionally, a second cleavage leads to the release of a fusion peptide after viral attachment to host cell receptor. In terms of processing, the cytoplasmic Cys-rich domain is palmitoylated. Spike glycoprotein is digested within host endosomes.

The protein resides in the virion membrane. The protein localises to the host endoplasmic reticulum-Golgi intermediate compartment membrane. Its subcellular location is the host cell membrane. In terms of biological role, attaches the virion to the cell membrane by interacting with host receptor, initiating the infection. Functionally, mediates fusion of the virion and cellular membranes by acting as a class I viral fusion protein. Under the current model, the protein has at least three conformational states: pre-fusion native state, pre-hairpin intermediate state, and post-fusion hairpin state. During viral and target cell membrane fusion, the coiled coil regions (heptad repeats) assume a trimer-of-hairpins structure, positioning the fusion peptide in close proximity to the C-terminal region of the ectodomain. The formation of this structure appears to drive apposition and subsequent fusion of viral and target cell membranes. Acts as a viral fusion peptide which is unmasked following S2 cleavage occurring upon virus endocytosis. The chain is Spike glycoprotein from Bos taurus (Bovine).